A 393-amino-acid polypeptide reads, in one-letter code: S-adenosylmethionine synthase (393 aa).

E9 contributes to the Mg(2+) binding site. ATP is bound at residue H15. E43 lines the K(+) pocket. Positions 56 and 99 each coordinate L-methionine. ATP is bound by residues 167–169 (HGK), 235–238 (SGRF), D246, 252–253 (RK), A269, K273, and K277. D246 is a binding site for L-methionine. K277 contributes to the L-methionine binding site.

This sequence belongs to the AdoMet synthase family. Homotetramer. The cofactor is Mn(2+). It depends on Mg(2+) as a cofactor. Requires Co(2+) as cofactor. K(+) is required as a cofactor. In terms of tissue distribution, root.

It is found in the cytoplasm. It carries out the reaction L-methionine + ATP + H2O = S-adenosyl-L-methionine + phosphate + diphosphate. It functions in the pathway amino-acid biosynthesis; S-adenosyl-L-methionine biosynthesis; S-adenosyl-L-methionine from L-methionine: step 1/1. Catalyzes the formation of S-adenosylmethionine from methionine and ATP. The reaction comprises two steps that are both catalyzed by the same enzyme: formation of S-adenosylmethionine (AdoMet) and triphosphate, and subsequent hydrolysis of the triphosphate. This chain is S-adenosylmethionine synthase (METK), found in Pinus banksiana (Jack pine).